A 925-amino-acid polypeptide reads, in one-letter code: MLSKIVGSVIGTKNDRELKRMRQIVAKVNAQEAAISALTDAQLRDKTAEFKSRFDEGASLDSLLPEAFAVCREASKRVLGMRHYDVQIIGGITLHEGKIAEMRTGEGKTLMATLAIYLNAISGKGVHVVTVNDYLAARDAELNRPLFDFLGLTVGVIYSQQPPYEKVAAYQSDITYGTNNEYGFDYLRDNMVFSLAEKKQRPLNYCIIDEIDSILIDEARTPLIISGQADDSSATYALINNIIPRLTRSTDEEANKENEDGDFWIDEKNRQIEISEKGYEKIESFLIEVGELGENESLYSPIRLPLLAHVQAAIRAHHIFIKNVHYIVDNGEVIIVDENTGRTMPGRRWSDGLHQAVEAKEGVEIQAENQTLATTTFQNYFRLYDKLSGMTGTADTEAAEFKSTYDIDVVVIPTHKPIARIDLEDQIFLTKLGKYKGIIREIKEIQAKGAPVLVGTATIEASEELSYLLDQEGIKHNVLNAKQHEREAEIIAQAGSPKAVTIATNMAGRGTDIILGGNWQAHISDPDNVSPEEMQRLKAAWQKKHDEVLAAGGLHIIGSERHESRRIDNQLRGRAGRQGDPGQSRFFLSLEDDLMRIFAGDRVVNMMRAMGLKEDEAIEHKMVSRSIENAQGKVESRDFDARKNLLKYDDIANEQRKVIYSQRDDLLAEADLKQAIEAMHRDVYDALISQFVPPGSIDDQWNIDGLEDELESEFKYYMPINDWLDSDRRLDEEGLREKIVQTAIARYRERRELMTPENAAQLERHFMLQSLDRHWKEHLTQMDQLRKGIHLRGYAQKDPQQEYKRESFELFQMMLGAIKSDTVQDLSRVHIPTREELEAMEAERLAQAERQQMMFEHDEVDSLTGERHSDPDVEARNLAAEQQATATKAPAAANGNNPYANMNISRNAPCPCGSGLRYKQCHGKI.

ATP-binding positions include Gln-87, 105–109 (GEGKT), and Asp-512. Residues Cys-910, Cys-912, Cys-921, and His-922 each coordinate Zn(2+).

It belongs to the SecA family. In terms of assembly, monomer and homodimer. Part of the essential Sec protein translocation apparatus which comprises SecA, SecYEG and auxiliary proteins SecDF-YajC and YidC. Zn(2+) is required as a cofactor.

Its subcellular location is the cell inner membrane. It is found in the cytoplasm. The catalysed reaction is ATP + H2O + cellular proteinSide 1 = ADP + phosphate + cellular proteinSide 2.. In terms of biological role, part of the Sec protein translocase complex. Interacts with the SecYEG preprotein conducting channel. Has a central role in coupling the hydrolysis of ATP to the transfer of proteins into and across the cell membrane, serving both as a receptor for the preprotein-SecB complex and as an ATP-driven molecular motor driving the stepwise translocation of polypeptide chains across the membrane. This Psychrobacter sp. (strain PRwf-1) protein is Protein translocase subunit SecA.